A 43-amino-acid polypeptide reads, in one-letter code: Protein PsbN (43 aa).

The helical transmembrane segment at 7–27 (VAIFISGLLVSFTGYALYTAF) threads the bilayer.

This sequence belongs to the PsbN family.

The protein resides in the plastid. It is found in the chloroplast thylakoid membrane. Functionally, may play a role in photosystem I and II biogenesis. The chain is Protein PsbN from Daucus carota (Wild carrot).